We begin with the raw amino-acid sequence, 484 residues long: DNA-binding protein (484 aa).

The disordered stretch occupies residues 1 to 69 (MASNQHSQRE…ESAEEEEAEP (69 aa)). A compositionally biased stretch (low complexity) spans 51 to 60 (SMAAIPLSPE). Y150 carries the post-translational modification Phosphotyrosine; by host. Zn(2+) is bound by residues C239 and H241. Residues 252–286 (VEMDVTSESGQRALKENPSKAKVAQNRWGRNVVQI) are flexible loop. Zn(2+) is bound by residues C294, C310, C351, C353, C405, and C421. Residues 468 to 484 (ISLPTNHGDCREEPFDF) form a C-terminal arm, DBP binding region.

Belongs to the adenoviridae E2A DNA-binding protein family. In terms of assembly, homomultimerizes on viral ssDNA bound to pTP. Forms a initiation complex with viral polymerase, pTP and hosts NFIA and POU2F1/OCT1. Interacts with host SRCAP.

The protein localises to the host nucleus. Its function is as follows. Plays a role in the elongation phase of viral strand displacement replication by unwinding the template in an ATP-independent fashion, employing its capacity to form multimers. Also enhances the rate of initiation. Released from template upon second strand synthesis. Assembles in complex with viral pTP, viral pol, host NFIA and host POU2F1/OCT1 on viral origin of replication. Covers the whole ssDNA genome during synthesis. The complementary strand synthesis induces its relese from DNA template. May inhibit cellular transcription mediated by the interaction between host SRCAP and CBP. This chain is DNA-binding protein, found in Human adenovirus A serotype 12 (HAdV-12).